Reading from the N-terminus, the 274-residue chain is Large ribosomal subunit protein uL2 (274 aa).

2 disordered regions span residues 40 to 59 (SGGRNNLGRVTRRHQGGGHK) and 223 to 274 (VAMN…RRSR). 2 stretches are compositionally biased toward basic residues: residues 49–59 (VTRRHQGGGHK) and 256–274 (YRTRRNKRTSNMIVRRRSR).

This sequence belongs to the universal ribosomal protein uL2 family. In terms of assembly, part of the 50S ribosomal subunit. Forms a bridge to the 30S subunit in the 70S ribosome.

Functionally, one of the primary rRNA binding proteins. Required for association of the 30S and 50S subunits to form the 70S ribosome, for tRNA binding and peptide bond formation. It has been suggested to have peptidyltransferase activity; this is somewhat controversial. Makes several contacts with the 16S rRNA in the 70S ribosome. In Acidithiobacillus ferrooxidans (strain ATCC 23270 / DSM 14882 / CIP 104768 / NCIMB 8455) (Ferrobacillus ferrooxidans (strain ATCC 23270)), this protein is Large ribosomal subunit protein uL2.